The primary structure comprises 588 residues: Calcium/calmodulin-dependent protein kinase kinase 2 (588 aa).

A compositionally biased stretch (polar residues) spans 1–11; the sequence is MSSCVSSQPTS. Disordered regions lie at residues 1 to 34 and 64 to 147; these read MSSCVSSQPTSDRVAPQDELGSGGGSREGQKPCE and DLNL…PTVE. Ser-2 is subject to N-acetylserine. 5 positions are modified to phosphoserine: Ser-99, Ser-114, Ser-129, Ser-133, and Ser-137. A compositionally biased stretch (polar residues) spans 101-116; sequence QEPSQGGPASSSNSLD. A compositionally biased stretch (low complexity) spans 124-139; the sequence is PSLSYSPASSPQSSPR. A Protein kinase domain is found at 165 to 446; sequence YTLKDEIGKG…VPEIKLHPWV (282 aa). ATP contacts are provided by residues 171-179 and Lys-194; that span reads IGKGSYGVV. The segment at 204–226 is RP domain; it reads QAGFPRRPPPRGARPAPGGCIQP. The interval 205-225 is disordered; that stretch reads AGFPRRPPPRGARPAPGGCIQ. The Proton acceptor role is filled by Asp-312. The tract at residues 472–477 is autoinhibitory domain; it reads ENSVKH. The tract at residues 475–500 is calmodulin-binding; sequence VKHIPSLATVILVKTMIRKRSFGNPF. Phosphoserine is present on residues Ser-495, Ser-511, Thr-522, and Ser-572. The disordered stretch occupies residues 497–588; the sequence is GNPFEGSRRE…LQPEEVMEPE (92 aa). The segment covering 521–536 has biased composition (basic and acidic residues); that stretch reads PTREWEPLSEPKEARQ. Residues 570 to 580 show a composition bias toward pro residues; that stretch reads PGSPPRMPPLQ.

This sequence belongs to the protein kinase superfamily. Ser/Thr protein kinase family. Interacts with calmodulin. Autophosphorylated and phosphorylated by PKA. Each isoform may show a different pattern of phosphorylation. Expressed in all tissues tested. A differential expression pattern compared to CAMKK1 is observed in the brain.

Its subcellular location is the nucleus. The protein localises to the cytoplasm. It localises to the cell projection. It is found in the neuron projection. It carries out the reaction L-seryl-[protein] + ATP = O-phospho-L-seryl-[protein] + ADP + H(+). The catalysed reaction is L-threonyl-[protein] + ATP = O-phospho-L-threonyl-[protein] + ADP + H(+). Activated by Ca(2+)/calmodulin. Binding of calmodulin may relieve intrasteric autoinhibition. Autophosphorylation does not alter activity or regulation by Ca(2+)/calmodulin. In part, activity is independent on Ca(2+)/calmodulin. Functionally, calcium/calmodulin-dependent protein kinase belonging to a proposed calcium-triggered signaling cascade involved in a number of cellular processes. Phosphorylates CAMK1, CAMK4 and CAMK1D. Efficiently phosphorylates 5'-AMP-activated protein kinase (AMPK) trimer, including that consisting of PRKAA1, PRKAB1 and PRKAG1. This phosphorylation is stimulated in response to Ca(2+) signals. May play a role in neurite growth. Isoform 2 may promote neurite elongation, while isoform 1 may promoter neurite branching. May be involved in hippocampal activation of CREB1. The polypeptide is Calcium/calmodulin-dependent protein kinase kinase 2 (Camkk2) (Mus musculus (Mouse)).